We begin with the raw amino-acid sequence, 214 residues long: Probable septum site-determining protein MinC (214 aa).

The protein belongs to the MinC family. As to quaternary structure, interacts with MinD and FtsZ.

Functionally, cell division inhibitor that blocks the formation of polar Z ring septums. Rapidly oscillates between the poles of the cell to destabilize FtsZ filaments that have formed before they mature into polar Z rings. Prevents FtsZ polymerization. The chain is Probable septum site-determining protein MinC from Thermoanaerobacter pseudethanolicus (strain ATCC 33223 / 39E) (Clostridium thermohydrosulfuricum).